A 125-amino-acid polypeptide reads, in one-letter code: Small ribosomal subunit protein uS13 (125 aa).

It belongs to the universal ribosomal protein uS13 family. Part of the 30S ribosomal subunit. Forms a loose heterodimer with protein S19. Forms two bridges to the 50S subunit in the 70S ribosome.

Functionally, located at the top of the head of the 30S subunit, it contacts several helices of the 16S rRNA. In the 70S ribosome it contacts the 23S rRNA (bridge B1a) and protein L5 of the 50S subunit (bridge B1b), connecting the 2 subunits; these bridges are implicated in subunit movement. Contacts the tRNAs in the A and P-sites. The sequence is that of Small ribosomal subunit protein uS13 from Rickettsia bellii (strain OSU 85-389).